Here is a 36-residue protein sequence, read N- to C-terminus: Photosystem I reaction center subunit VIII (36 aa).

The helical transmembrane segment at 7–29 (PSILVPLVGILLPAVTMASLFLY) threads the bilayer.

This sequence belongs to the PsaI family.

Its subcellular location is the plastid. The protein localises to the chloroplast thylakoid membrane. Its function is as follows. May help in the organization of the PsaL subunit. This Adiantum capillus-veneris (Maidenhair fern) protein is Photosystem I reaction center subunit VIII.